The primary structure comprises 139 residues: uncharacterized protein (139 aa).

This is an uncharacterized protein from Sputnik virophage.